Reading from the N-terminus, the 482-residue chain is tRNA sulfurtransferase (482 aa).

The 105-residue stretch at 61-165 (LAIRDALTRI…DDRLLLIKGR (105 aa)) folds into the THUMP domain. Residues 183–184 (LI), Lys-265, Gly-287, and Gln-296 each bind ATP. Cys-344 and Cys-456 form a disulfide bridge. Residues 404-482 (FGPNDVILDI…GFNNVKVYRP (79 aa)) form the Rhodanese domain. The Cysteine persulfide intermediate role is filled by Cys-456.

It belongs to the ThiI family.

The protein localises to the cytoplasm. It catalyses the reaction [ThiI sulfur-carrier protein]-S-sulfanyl-L-cysteine + a uridine in tRNA + 2 reduced [2Fe-2S]-[ferredoxin] + ATP + H(+) = [ThiI sulfur-carrier protein]-L-cysteine + a 4-thiouridine in tRNA + 2 oxidized [2Fe-2S]-[ferredoxin] + AMP + diphosphate. The enzyme catalyses [ThiS sulfur-carrier protein]-C-terminal Gly-Gly-AMP + S-sulfanyl-L-cysteinyl-[cysteine desulfurase] + AH2 = [ThiS sulfur-carrier protein]-C-terminal-Gly-aminoethanethioate + L-cysteinyl-[cysteine desulfurase] + A + AMP + 2 H(+). It functions in the pathway cofactor biosynthesis; thiamine diphosphate biosynthesis. Its function is as follows. Catalyzes the ATP-dependent transfer of a sulfur to tRNA to produce 4-thiouridine in position 8 of tRNAs, which functions as a near-UV photosensor. Also catalyzes the transfer of sulfur to the sulfur carrier protein ThiS, forming ThiS-thiocarboxylate. This is a step in the synthesis of thiazole, in the thiamine biosynthesis pathway. The sulfur is donated as persulfide by IscS. This is tRNA sulfurtransferase from Escherichia fergusonii (strain ATCC 35469 / DSM 13698 / CCUG 18766 / IAM 14443 / JCM 21226 / LMG 7866 / NBRC 102419 / NCTC 12128 / CDC 0568-73).